A 324-amino-acid polypeptide reads, in one-letter code: Homocysteine S-methyltransferase 1 (324 aa).

Residues 6–320 (IKELIVEHPG…KDIAEIASAV (315 aa)) enclose the Hcy-binding domain. Zn(2+) is bound by residues cysteine 238, cysteine 305, and cysteine 306.

Zn(2+) is required as a cofactor.

Its subcellular location is the cytoplasm. It catalyses the reaction S-methyl-L-methionine + L-homocysteine = 2 L-methionine + H(+). In terms of biological role, homocysteine S-methyltransferase involved in the conversion of S-adenosylmethionine (AdoMet) to methionine to control the methionine/AdoMet ratio. Also converts S-methylmethionine (SMM) to methionine. This chain is Homocysteine S-methyltransferase 1 (MHT1), found in Saccharomyces cerevisiae (strain ATCC 204508 / S288c) (Baker's yeast).